The primary structure comprises 209 residues: Uracil phosphoribosyltransferase (209 aa).

Residues Arg79, Arg104, and 131–139 (DPMLATGGS) each bind 5-phospho-alpha-D-ribose 1-diphosphate. Residues Ile194 and 199–201 (GDA) each bind uracil. A 5-phospho-alpha-D-ribose 1-diphosphate-binding site is contributed by Asp200.

The protein belongs to the UPRTase family. Mg(2+) serves as cofactor.

The catalysed reaction is UMP + diphosphate = 5-phospho-alpha-D-ribose 1-diphosphate + uracil. Its pathway is pyrimidine metabolism; UMP biosynthesis via salvage pathway; UMP from uracil: step 1/1. Allosterically activated by GTP. Functionally, catalyzes the conversion of uracil and 5-phospho-alpha-D-ribose 1-diphosphate (PRPP) to UMP and diphosphate. The chain is Uracil phosphoribosyltransferase from Streptococcus salivarius.